A 386-amino-acid chain; its full sequence is MSHIQPTLALTEDLIRRRSVTPEDKGCQDVLIERLTAAGFECETVISGPDHFRVTNLWAVKRGRAGTDGKLLVFAGHTDVVPTGPVEQWHSDPFEPTHRDGKLYARGAADMKTSIAGFVVASEEFVAKHPDHAGSIGFLITSDEEGPAHDGTVKVCDLLRARGERLDYCVVGEPTSVSTLGDMVKNGRRGSLSGKLTVNGVQGHIAYPHLAKNPIHMAAPALAELAAAKWDDGNAYFPPTTWQMSNIHGGTGATNIIPGHVTIDFNFRFSTASTPDGLKARVHSILDAHGLDYTLDWTLGGEPFLTERGELSEALASAIQAECGVTTELSTTGGTSDGRFIAKICPQVIEFGPPNASIHKIDEHVEVAFIEPLKNVYRRVLETLIA.

Residue His77 participates in Zn(2+) binding. The active site involves Asp79. Position 110 (Asp110) interacts with Zn(2+). Glu144 functions as the Proton acceptor in the catalytic mechanism. Residues Glu145, Glu173, and His359 each coordinate Zn(2+).

This sequence belongs to the peptidase M20A family. DapE subfamily. As to quaternary structure, homodimer. The cofactor is Zn(2+). Co(2+) is required as a cofactor.

The enzyme catalyses N-succinyl-(2S,6S)-2,6-diaminopimelate + H2O = (2S,6S)-2,6-diaminopimelate + succinate. It functions in the pathway amino-acid biosynthesis; L-lysine biosynthesis via DAP pathway; LL-2,6-diaminopimelate from (S)-tetrahydrodipicolinate (succinylase route): step 3/3. In terms of biological role, catalyzes the hydrolysis of N-succinyl-L,L-diaminopimelic acid (SDAP), forming succinate and LL-2,6-diaminopimelate (DAP), an intermediate involved in the bacterial biosynthesis of lysine and meso-diaminopimelic acid, an essential component of bacterial cell walls. This is Succinyl-diaminopimelate desuccinylase from Ralstonia pickettii (strain 12J).